A 467-amino-acid polypeptide reads, in one-letter code: Retinoic acid receptor RXR-alpha (467 aa).

The segment at 1–112 (MDTKHFLPLD…MNPVSSTEDI (112 aa)) is disordered. Positions 1–139 (MDTKHFLPLD…GNMASFTKHI (139 aa)) are modulating domain. A Glycyl lysine isopeptide (Lys-Gly) (interchain with G-Cter in SUMO2) cross-link involves residue Lys4. Positions 11–25 (FSTQVNSSSLNSPTG) are enriched in polar residues. Residues Ser22 and Ser28 each carry the phosphoserine modification. Over residues 32 to 52 (PSLHPSLGPGIGSPLGSPGQL) the composition is skewed to low complexity. A compositionally biased stretch (polar residues) spans 54-63 (SPISTLSSPI). Residues Ser61 and Ser75 each carry the phosphoserine; by MAPK8 and MAPK9 modification. The span at 83–109 (SVPTTPTLGFGTGSPQLNSPMNPVSST) shows a compositional bias: polar residues. Position 87 is a phosphothreonine; by MAPK8 and MAPK9 (Thr87). Residue Lys113 forms a Glycyl lysine isopeptide (Lys-Gly) (interchain with G-Cter in SUMO) linkage. Ser134 carries the post-translational modification Phosphoserine. The Zn(2+) site is built by Cys140 and Cys143. The segment at 140–160 (CAICGDRSSGKHYGVYSCEGC) adopts an NR C4-type zinc-finger fold. Residues 140-205 (CAICGDRSSG…RYQKCLAMGM (66 aa)) constitute a DNA-binding region (nuclear receptor). Lys150 bears the N6-acetyllysine mark. Cys157 and Cys160 together coordinate Zn(2+). The tract at residues 165-170 (KRTVRK) is nuclear localization signal. The Zn(2+) site is built by Cys176, Cys182, Cys192, and Cys195. Residues 176–200 (CRDNKDCLIDKRQRNRCQYCRYQKC) form an NR C4-type zinc finger. Residues 206 to 229 (KREAVQEERQRGKDRNENEVESTS) are hinge. Residues 211 to 223 (QEERQRGKDRNEN) show a composition bias toward basic and acidic residues. The disordered stretch occupies residues 211-233 (QEERQRGKDRNENEVESTSSANE). The 232-residue stretch at 232–463 (NEDMPVEKIL…TFLMEMLEAP (232 aa)) folds into the NR LBD domain. A Phosphoserine modification is found at Ser264. Ser265 carries the post-translational modification Phosphoserine; by MAPK8 and MAPK9. The 9-cis-retinoate site is built by Arg321 and Ala332. Positions 321 and 332 each coordinate all-trans-retinoate. The segment at 353–373 (RVLTELVSKMRDMQMDKTELG) is required for nuclear export.

It belongs to the nuclear hormone receptor family. NR2 subfamily. In terms of assembly, homodimer. Heterodimer with RARA; required for ligand-dependent retinoic acid receptor transcriptional activity. Heterodimer with PPARA (via the leucine-like zipper in the LBD); the interaction is required for PPARA transcriptional activity. Heterodimerizes with PPARG. Heterodimerizes (via NR LBD) with RARB. Heterodimerizes with NR1H4; the heterodimerization enhances the binding affinity for LXXLL motifs from coactivators. Interacts with coactivator NCO6. Interacts with coactivator NCO3. Interacts with coactivator FAM120B. Interacts with coactivator PELP1, SENP6, SFPQ, DNTTIP2 and RNF8. Interacts with PRMT2. Interacts with ASXL1. Interacts with BHLHE40/DEC1, BHLHE41/DEC2, NCOR1 and NCOR2. Interacts in a ligand-dependent fashion with MED1 and NCOA1. Interacts with VDR. Interacts with EP300; the interaction is decreased by 9-cis retinoic acid. Heterodimer (via C-terminus) with NR4A1 (via DNA-binding domain); the interaction is enhanced by 9-cis retinoic acid. NR4A1 competes with EP300 for interaction with RXRA and thereby attenuates EP300 mediated acetylation of RXRA. In the absence of hormonal ligand, interacts with TACC1. Interacts ith IGFBP3. Post-translationally, acetylated by EP300; acetylation enhances DNA binding and transcriptional activity. In terms of processing, phosphorylated on serine and threonine residues mainly in the N-terminal modulating domain. Constitutively phosphorylated on Ser-22 in the presence or absence of ligand. Under stress conditions, hyperphosphorylated by activated JNK on Ser-61, Ser-75, Thr-87 and Ser-265. Phosphorylated on Ser-28, in vitro, by PKA. This phosphorylation is required for repression of cAMP-mediated transcriptional activity of RARA. Ubiquitinated by UBR5, leading to its degradation: UBR5 specifically recognizes and binds ligand-bound RXRA when it is not associated with coactivators (NCOAs). In presence of NCOAs, the UBR5-degron is not accessible, preventing its ubiquitination and degradation. Post-translationally, sumoylation negatively regulates transcriptional activity. Desumoylated specifically by SENP6. As to expression, expressed in macrophages (at protein level).

It localises to the nucleus. It is found in the cytoplasm. The protein localises to the mitochondrion. Functionally, receptor for retinoic acid that acts as a transcription factor. Forms homo- or heterodimers with retinoic acid receptors (RARs) and binds to target response elements in response to their ligands, all-trans or 9-cis retinoic acid, to regulate gene expression in various biological processes. The RAR/RXR heterodimers bind to the retinoic acid response elements (RARE) composed of tandem 5'-AGGTCA-3' sites known as DR1-DR5 to regulate transcription. The high affinity ligand for retinoid X receptors (RXRs) is 9-cis retinoic acid. In the absence of ligand, the RXR-RAR heterodimers associate with a multiprotein complex containing transcription corepressors that induce histone deacetylation, chromatin condensation and transcriptional suppression. On ligand binding, the corepressors dissociate from the receptors and coactivators are recruited leading to transcriptional activation. Serves as a common heterodimeric partner for a number of nuclear receptors, such as RARA, RARB and PPARA. The RXRA/RARB heterodimer can act as a transcriptional repressor or transcriptional activator, depending on the RARE DNA element context. The RXRA/PPARA heterodimer is required for PPARA transcriptional activity on fatty acid oxidation genes such as ACOX1 and the P450 system genes. Together with RARA, positively regulates microRNA-10a expression, thereby inhibiting the GATA6/VCAM1 signaling response to pulsatile shear stress in vascular endothelial cells. Acts as an enhancer of RARA binding to RARE DNA element. May facilitate the nuclear import of heterodimerization partners such as VDR and NR4A1. Promotes myelin debris phagocytosis and remyelination by macrophages. Plays a role in the attenuation of the innate immune system in response to viral infections, possibly by negatively regulating the transcription of antiviral genes such as type I IFN genes. Involved in the regulation of calcium signaling by repressing ITPR2 gene expression, thereby controlling cellular senescence. The polypeptide is Retinoic acid receptor RXR-alpha (Rxra) (Mus musculus (Mouse)).